The chain runs to 156 residues: 6,7-dimethyl-8-ribityllumazine synthase (156 aa).

5-amino-6-(D-ribitylamino)uracil contacts are provided by residues F22, 56-58 (AFE), and 80-82 (VVI). 85–86 (ST) lines the (2S)-2-hydroxy-3-oxobutyl phosphate pocket. H88 functions as the Proton donor in the catalytic mechanism. F113 is a 5-amino-6-(D-ribitylamino)uracil binding site. R127 is a (2S)-2-hydroxy-3-oxobutyl phosphate binding site.

This sequence belongs to the DMRL synthase family.

It catalyses the reaction (2S)-2-hydroxy-3-oxobutyl phosphate + 5-amino-6-(D-ribitylamino)uracil = 6,7-dimethyl-8-(1-D-ribityl)lumazine + phosphate + 2 H2O + H(+). Its pathway is cofactor biosynthesis; riboflavin biosynthesis; riboflavin from 2-hydroxy-3-oxobutyl phosphate and 5-amino-6-(D-ribitylamino)uracil: step 1/2. Functionally, catalyzes the formation of 6,7-dimethyl-8-ribityllumazine by condensation of 5-amino-6-(D-ribitylamino)uracil with 3,4-dihydroxy-2-butanone 4-phosphate. This is the penultimate step in the biosynthesis of riboflavin. The sequence is that of 6,7-dimethyl-8-ribityllumazine synthase from Streptococcus agalactiae serotype Ia (strain ATCC 27591 / A909 / CDC SS700).